We begin with the raw amino-acid sequence, 925 residues long: Aspulvinone E synthetase melA (925 aa).

The adenylation (A) domain stretch occupies residues 11-434; that stretch reads ETAAARNGDG…GGRAKETIII (424 aa). The Carrier domain occupies 564–644; that stretch reads SPKNDFEKGL…ELAAALDNLY (81 aa). The residue at position 601 (S601) is an O-(pantetheine 4'-phosphoryl)serine. Residues 663–923 are thioesterase (TE) domain; it reads PLWLVHPGAG…KILRSALAER (261 aa).

It belongs to the ATP-dependent AMP-binding enzyme family.

The protein resides in the cytoplasm. In terms of biological role, nonribosomal peptide synthase; part of the gene cluster that mediates the biosynthesis of Asp-melanin, a pigment that confers resistance against UV light and hampers phagocytosis by soil amoeba. The nonribosomal peptide synthase melA converts 4-hydroxyphenylpyruvate (4-HPPA) to aspulvinone E. The tyrosinase tyrP then performs hydroxylations of both aromatic moieties of aspulvinone E. The product of tyrP is highly unstable, and, due to the high reactivity of methides and ortho-diquinones, the polymeric Asp-melanin forms spontaneously. This chain is Aspulvinone E synthetase melA, found in Aspergillus terreus.